The following is a 134-amino-acid chain: Profilin-3 (134 aa).

The cysteines at positions 13 and 118 are disulfide-linked. The Involved in PIP2 interaction signature appears at 84 to 100; it reads AVIRGKKGSGGITIKKT. At T114 the chain carries Phosphothreonine.

This sequence belongs to the profilin family. As to quaternary structure, occurs in many kinds of cells as a complex with monomeric actin in a 1:1 ratio. In terms of processing, phosphorylated by MAP kinases.

It is found in the cytoplasm. The protein localises to the cytoskeleton. Binds to actin and affects the structure of the cytoskeleton. At high concentrations, profilin prevents the polymerization of actin, whereas it enhances it at low concentrations. The polypeptide is Profilin-3 (Olea europaea (Common olive)).